A 333-amino-acid chain; its full sequence is Pro-cathepsin H (333 aa).

Positions 1 to 20 (MWAALPLLCAGAWLLSTGAT) are cleaved as a signal peptide. Residues 21–95 (AELTVNAIEK…AEIKHKFLWS (75 aa)) constitute a propeptide, activation peptide. N-linked (GlcNAc...) asparagine glycosylation is found at Asn-70 and Asn-99. Disulfide bonds link Cys-100–Cys-325, Cys-136–Cys-179, Cys-170–Cys-212, and Cys-270–Cys-320. Residues 104-113 (KSNYLRGTGP) constitute a propeptide that is removed on maturation. Cys-139 is a catalytic residue. A glycan (N-linked (GlcNAc...) asparagine) is linked at Asn-228. Active-site residues include His-279 and Asn-299.

It belongs to the peptidase C1 family. Composed of a mini chain and a large chain. The large chain may be split into heavy and light chain. All chains are held together by disulfide bonds. In terms of tissue distribution, widely expressed with highest expression found in non-skeletal tissues. Low levels found in skeletal tissue.

It localises to the lysosome. The catalysed reaction is Hydrolysis of proteins, acting as an aminopeptidase (notably, cleaving Arg-|-Xaa bonds) as well as an endopeptidase.. Functionally, important for the overall degradation of proteins in lysosomes. In Mus musculus (Mouse), this protein is Pro-cathepsin H (Ctsh).